The sequence spans 362 residues: Carbamoyl phosphate synthase small chain (362 aa).

The tract at residues 1–172 is CPSase; it reads MKAFLVLDNG…SKYIFGTHTG (172 aa). L-glutamine is bound by residues Ser45, Gly224, and Gly226. The 187-residue stretch at 176-362 folds into the Glutamine amidotransferase type-1 domain; that stretch reads KLAVYDYGVK…YDLVEKTKKG (187 aa). Cys252 serves as the catalytic Nucleophile. L-glutamine-binding residues include Leu253, Gln256, Asn294, Gly296, and Phe297. Catalysis depends on residues His335 and Glu337.

It belongs to the CarA family. Composed of two chains; the small (or glutamine) chain promotes the hydrolysis of glutamine to ammonia, which is used by the large (or ammonia) chain to synthesize carbamoyl phosphate. Tetramer of heterodimers (alpha,beta)4.

The catalysed reaction is hydrogencarbonate + L-glutamine + 2 ATP + H2O = carbamoyl phosphate + L-glutamate + 2 ADP + phosphate + 2 H(+). The enzyme catalyses L-glutamine + H2O = L-glutamate + NH4(+). The protein operates within amino-acid biosynthesis; L-arginine biosynthesis; carbamoyl phosphate from bicarbonate: step 1/1. Its pathway is pyrimidine metabolism; UMP biosynthesis via de novo pathway; (S)-dihydroorotate from bicarbonate: step 1/3. In terms of biological role, small subunit of the glutamine-dependent carbamoyl phosphate synthetase (CPSase). CPSase catalyzes the formation of carbamoyl phosphate from the ammonia moiety of glutamine, carbonate, and phosphate donated by ATP, constituting the first step of 2 biosynthetic pathways, one leading to arginine and/or urea and the other to pyrimidine nucleotides. The small subunit (glutamine amidotransferase) binds and cleaves glutamine to supply the large subunit with the substrate ammonia. This Leptospira interrogans serogroup Icterohaemorrhagiae serovar Lai (strain 56601) protein is Carbamoyl phosphate synthase small chain.